The sequence spans 265 residues: MNKDVSLGQPIVRYEDGKLFNTTDQYVTEFPLTIMVNGEEFATVICSPTNLEELVIGFLASEGAILKRDELKSVLIDDSKGFAHVELNKDLGDRFQYSTKRMIASCCGKSREFYFQNDAAVAKTSMSKITLTPQQIINMMTRLQSASHIYQETGGLHNAALSDGLTFFVHRQDIGRHNALDKLYGFCIQRHITVRDKVLIFSGRISSEILIKAAKIGVGVILSKSAPTTLAVTLANDLNITAVGFIRNGGFNIYSHPERIIDSEQ.

C107 acts as the Cysteine persulfide intermediate in catalysis.

It belongs to the FdhD family.

Its subcellular location is the cytoplasm. Required for formate dehydrogenase (FDH) activity. Acts as a sulfur carrier protein that transfers sulfur from IscS to the molybdenum cofactor prior to its insertion into FDH. The chain is Sulfur carrier protein FdhD from Staphylococcus aureus (strain MRSA252).